The primary structure comprises 100 residues: uncharacterized protein (100 aa).

This is an uncharacterized protein from Schizosaccharomyces pombe (strain 972 / ATCC 24843) (Fission yeast).